We begin with the raw amino-acid sequence, 95 residues long: Enhancer of yellow 2 transcription factor (95 aa).

Belongs to the ENY2 family. As to quaternary structure, component of the nuclear pore complex (NPC)-associated AMEX complex (anchoring and mRNA export complex), composed of at least e(y)2 and xmas-2. Component of the SAGA transcription coactivator-HAT complexes, at least composed of Ada2b, e(y)2, Pcaf/Gcn5, Taf10 and Nipped-A/Trrap. Within the SAGA complex, e(y)2, Sgf11, and not/nonstop form an additional subcomplex of SAGA called the DUB module (deubiquitination module). Component of the THO complex, composed of at least e(y)2, HPR1, THO2, THOC5, THOC6 and THOC7. Interacts with e(y)1. Interacts with su(Hw) (via zinc fingers). Interacts with xmas-2; required for localization to the nuclear periphery. Interacts with the nuclear pore complex (NPC).

The protein resides in the nucleus. The protein localises to the nucleoplasm. It localises to the cytoplasm. Its function is as follows. Involved in mRNA export coupled transcription activation by association with both the AMEX and the SAGA complexes. The SAGA complex is a multiprotein complex that activates transcription by remodeling chromatin and mediating histone acetylation and deubiquitination. Within the SAGA complex, participates in a subcomplex that specifically deubiquitinates histone H2B. The SAGA complex is recruited to specific gene promoters by activators, where it is required for transcription. Required for nuclear receptor-mediated transactivation. Involved in transcription elongation by recruiting the THO complex onto nascent mRNA. The AMEX complex functions in docking export-competent ribonucleoprotein particles (mRNPs) to the nuclear entrance of the nuclear pore complex (nuclear basket). AMEX participates in mRNA export and accurate chromatin positioning in the nucleus by tethering genes to the nuclear periphery. In Drosophila virilis (Fruit fly), this protein is Enhancer of yellow 2 transcription factor.